Reading from the N-terminus, the 397-residue chain is Izumo sperm-egg fusion protein 1 (397 aa).

The N-terminal stretch at 1–21 (MGPHFTLLLAALANCLCPGRP) is a signal peptide. 5 cysteine pairs are disulfide-bonded: Cys22/Cys149, Cys25/Cys152, Cys135/Cys159, Cys139/Cys165, and Cys182/Cys233. Residues 22–319 (CIKCDQFVTD…QNPEKKMKTR (298 aa)) lie on the Extracellular side of the membrane. The tract at residues 148-160 (WCLKCEKQLHICR) is important for interaction with IZUMO1R. In terms of domain architecture, Ig-like C2-type spans 167 to 251 (ERHIEVHRSE…HATVIRYDVT (85 aa)). The N-linked (GlcNAc...) asparagine glycan is linked to Asn204. The tract at residues 271–292 (EHETPVHVTPQTPPGQEPESEL) is disordered. A helical membrane pass occupies residues 320 to 340 (LLILLTLGFVVLVASIIISVL). At 341–397 (HFRKVSAKLKNASDEVKPTASGSKSDQSLSQQMGLKKASQADFNSDYSGDKSEATEN) the chain is on the cytoplasmic side. Positions 351–397 (NASDEVKPTASGSKSDQSLSQQMGLKKASQADFNSDYSGDKSEATEN) are disordered. Residues 360–373 (ASGSKSDQSLSQQM) are compositionally biased toward polar residues. A Phosphoserine modification is found at Ser379. The span at 388–397 (SGDKSEATEN) shows a compositional bias: basic and acidic residues.

It belongs to the Izumo family. In terms of assembly, monomer, homodimer; disulfide-linked and homooligomer; depending on the context. Interacts with IZUMO1R/JUNO. IZUMO1 and IZUMO1R/JUNO form a complex with 1:1 stoichiometry. In gamete recognition, IZUMO1R/JUNO first binds to monomeric IZUMO1. The weak, but specific interaction with IZUMO1R/JUNO induces IZUMO1 homodimerization. The process follows a tight binding phase where IZUMO1 bends the entire structure towards the sperm membrane side through a thiol-disulfide exchange reaction. The molecule no longer binds to IZUMO1R/JUNO and instead binds to a putative second oocyte receptor. Interacts with ACE3. Part of a oolemmal binding multimeric complex (IZUMO1 complex) composed at least of IZUMO1 and GLIPR1L1; the complex assemblage is influenced by the maturation status of the male germ cell. Interacts with GLIPR1L1. Interacts with FREY; the interaction retains IZUMO1 at the endoplasmic reticulum membrane and coordinates IZUMO1 complex assembly. Interacts with WDR54. Forms a complex with SPACA6 and TMEM81 on spermatocyte cell membrane. In terms of processing, N-glycosylated. Glycosylation is not essential for fusion and for proper protein trafficking in sperm. Phosphorylated. The cytoplasmic C-terminus is phosphorylated and undergoes phosphorylation changes during epididymal transit. Sperm-specific (at protein level). Detectable on sperm surface only after the acrosome reaction. Expressed in spermatozoa, more abundantly expressed in the head than the tail (at protein level).

The protein resides in the cell membrane. The protein localises to the cytoplasmic vesicle. It is found in the secretory vesicle. It localises to the acrosome membrane. In terms of biological role, essential sperm cell-surface protein required for fertilization by acting as a ligand for IZUMO1R/JUNO receptor on egg. The IZUMO1:IZUMO1R/JUNO interaction is a necessary adhesion event between sperm and egg that is required for fertilization but is not sufficient for cell fusion. The ligand-receptor interaction probably does not act as a membrane 'fusogen'. Plays a critical role in sperm-oolemma binding prior to plasma membrane fusion. Can mediate cell-cell fusion in cultured mammalian cells independently of its binding to IZUMO1R/JUNO. The chain is Izumo sperm-egg fusion protein 1 from Mus musculus (Mouse).